Here is a 259-residue protein sequence, read N- to C-terminus: MALLQKTRIINSMLQDAAGKPVNFKEMAETLRDVIDSNIFVLSRRGKLLGYSINQQIENPRMKKMLEDRQFPEEYTKSLFNIPETSSNLDINSEYTAFPIENRDLFESGLTTIVPIIGGGDRLGTLILSRLQDTFKDDDLILAEYGATVVGMEILREKAEEIEEEARSKAVVQMAISSLSYSELEAIEHIFEELDGNEGLLVASKIADRVGITRSVIVNALRKLESAGVIESRSLGMKGTYIKVLNNKFLIELENLKSH.

Positions 1–155 (MALLQKTRII…GATVVGMEIL (155 aa)) are GAF domain. Positions 203–222 (ASKIADRVGITRSVIVNALR) form a DNA-binding region, H-T-H motif. S215 carries the phosphoserine modification.

Belongs to the CodY family.

It is found in the cytoplasm. Its function is as follows. DNA-binding global transcriptional regulator which is involved in the adaptive response to starvation and acts by directly or indirectly controlling the expression of numerous genes in response to nutrient availability. During rapid exponential growth, CodY is highly active and represses genes whose products allow adaptation to nutrient depletion. The sequence is that of Global transcriptional regulator CodY from Bacillus pumilus (strain SAFR-032).